The chain runs to 299 residues: ATP phosphoribosyltransferase (299 aa).

It belongs to the ATP phosphoribosyltransferase family. Long subfamily. Mg(2+) serves as cofactor.

Its subcellular location is the cytoplasm. The catalysed reaction is 1-(5-phospho-beta-D-ribosyl)-ATP + diphosphate = 5-phospho-alpha-D-ribose 1-diphosphate + ATP. It participates in amino-acid biosynthesis; L-histidine biosynthesis; L-histidine from 5-phospho-alpha-D-ribose 1-diphosphate: step 1/9. Its activity is regulated as follows. Feedback inhibited by histidine. In terms of biological role, catalyzes the condensation of ATP and 5-phosphoribose 1-diphosphate to form N'-(5'-phosphoribosyl)-ATP (PR-ATP). Has a crucial role in the pathway because the rate of histidine biosynthesis seems to be controlled primarily by regulation of HisG enzymatic activity. The polypeptide is ATP phosphoribosyltransferase (Shewanella halifaxensis (strain HAW-EB4)).